The following is a 279-amino-acid chain: MSLKKFRPITPGTRFRVAASYDDVTTSTPEKSLVVSIKKSGGRNSQGKMTMRYIGGGHKQQYRIIDFKRDKHAIPAVVKTIEYDPNRTARIALLSYADGEKRYIIAPTGLEVGNTILSGPGIAPEVGNCLPLSDIPLGTVVHNIELKPGKGAAMARSAGTYAQLVAREGKYATLKLPSGEMRMVLVVCYASIGTVSNADHMNLTKGKAGATRWAGRRPRVRGVAMNPVDHPMGGGEGRSSGGHPRSRKGLYAKGGKTRSANKYSKNMIVKKRVNKRLSK.

Residues valine 223 to lysine 279 are disordered. A compositionally biased stretch (basic residues) spans isoleucine 268 to lysine 279.

It belongs to the universal ribosomal protein uL2 family. Part of the 50S ribosomal subunit. Forms a bridge to the 30S subunit in the 70S ribosome.

One of the primary rRNA binding proteins. Required for association of the 30S and 50S subunits to form the 70S ribosome, for tRNA binding and peptide bond formation. It has been suggested to have peptidyltransferase activity; this is somewhat controversial. Makes several contacts with the 16S rRNA in the 70S ribosome. The sequence is that of Large ribosomal subunit protein uL2 from Cytophaga hutchinsonii (strain ATCC 33406 / DSM 1761 / CIP 103989 / NBRC 15051 / NCIMB 9469 / D465).